The following is a 573-amino-acid chain: uncharacterized protein (573 aa).

Positions 15-298 (AGIALILMLT…FPFLIMIFTR (284 aa)) constitute an ABC transmembrane type-1 domain. A run of 6 helical transmembrane segments spans residues 17–37 (IALI…LLIA), 52–72 (VWIW…AGML), 127–147 (IFMS…GIVL), 153–173 (VKLG…LLWV), 238–258 (FTMP…LWAG), and 275–295 (IINY…LIMI). The region spanning 330-563 (IEFQHVSFRY…SQLYKRIYES (234 aa)) is the ABC transporter domain. Position 364–371 (364–371 (GATGSGKS)) interacts with ATP.

Belongs to the ABC transporter superfamily.

It is found in the cell membrane. This is an uncharacterized protein from Bacillus subtilis (strain 168).